The chain runs to 314 residues: Melanoma-associated antigen 12 (314 aa).

The segment covering 1 to 14 has biased composition (basic and acidic residues); the sequence is MPLEQRSQHCKPEE. The interval 1 to 72 is disordered; that stretch reads MPLEQRSQHC…HSPQGASTLP (72 aa). Residues 17–44 are compositionally biased toward low complexity; it reads EAQGEALGLVGAQAPATEEQETASSSST. Positions 109–308 constitute an MAGE domain; the sequence is LSRKMAELVH…ISYPPLHEWA (200 aa).

As to expression, expressed in many tumors of several types, such as melanoma, head and neck squamous cell carcinoma, lung carcinoma and breast carcinoma, but not in normal tissues except for testes.

In terms of biological role, not known, though may play a role tumor transformation or progression. In vitro promotes cell viability in melanoma cell lines. The sequence is that of Melanoma-associated antigen 12 (MAGEA12) from Homo sapiens (Human).